A 394-amino-acid chain; its full sequence is Saposin-like protein 11 (394 aa).

The signal sequence occupies residues 1–18 (MSVFRFLLFLSLLVGSNA). Residues Asn25 and Asn272 are each glycosylated (N-linked (GlcNAc...) asparagine). In terms of domain architecture, Saposin B-type spans 306-394 (GNMVCDICEK…SFCKHVPFCK (89 aa)). 3 cysteine pairs are disulfide-bonded: Cys310–Cys393, Cys313–Cys387, and Cys343–Cys359.

The protein is Saposin-like protein 11 (spp-11) of Caenorhabditis elegans.